The chain runs to 205 residues: Ypt/Rab-type GTPase Rab7 (205 aa).

Residues serine 17–serine 23, phenylalanine 33–threonine 40, glycine 66, asparagine 125–aspartate 128, and serine 157–lysine 159 each bind GTP. The Effector region motif lies at tyrosine 37–phenylalanine 45. Residues cysteine 203 and cysteine 205 are each lipidated (S-geranylgeranyl cysteine). Position 205 is a cysteine methyl ester (cysteine 205).

This sequence belongs to the small GTPase superfamily. Rab family.

The protein localises to the cell membrane. With respect to regulation, alternates between an inactive form bound to GDP and an active form bound to GTP. Activated by guanine nucleotide-exchange factors (GEFs), and inactivated by GTPase-activating proteins (GAPs). Its function is as follows. Ypt/Rab-type GTPases are key regulators of membrane trafficking and intracellular vesicular transport. They act as molecular switches that convert between GTP-bound and GDP-bound states, and regulate virtually all steps of membrane traffic from the formation of the transport vesicle at the donor membrane to its fusion at the target membrane. In the GDP-bound state, Ypt proteins are predominantly cytosolic, solubilized through the interaction with a GDP dissociation inhibitor (GDI). In the GTP-bound state, the proteins are membrane bound and interact with specific effector proteins that select cargo, promote vesicle movement, or verify the correct site of fusion. This chain is Ypt/Rab-type GTPase Rab7 (gtp-14), found in Neurospora crassa (strain ATCC 24698 / 74-OR23-1A / CBS 708.71 / DSM 1257 / FGSC 987).